Reading from the N-terminus, the 1128-residue chain is Scavenger receptor cysteine-rich domain superfamily protein (1128 aa).

An N-terminal signal peptide occupies residues 1 to 24 (MTSLRRGNICWVAVCAALLTLTRG). Over 25–1051 (IDVIAKPSRT…VGAQAGPAGG (1027 aa)) the chain is Extracellular. SRCR domains are found at residues 40–140 (VQLV…VVCN), 143–245 (VRLA…VICT), 248–348 (IRLV…VICT), 351–450 (VRLV…AKCQ), 453–553 (VQLV…VVCR), 555–654 (IRLA…VVCR), 657–757 (LRLA…VVCT), 759–866 (LRLT…VLCK), and 868–968 (IRLV…VQCK). Cystine bridges form between cysteine 65–cysteine 129, cysteine 78–cysteine 139, cysteine 109–cysteine 119, cysteine 168–cysteine 234, cysteine 181–cysteine 244, cysteine 212–cysteine 222, cysteine 273–cysteine 337, cysteine 286–cysteine 347, cysteine 316–cysteine 326, cysteine 376–cysteine 439, cysteine 389–cysteine 449, cysteine 419–cysteine 429, cysteine 478–cysteine 542, cysteine 491–cysteine 552, cysteine 522–cysteine 532, cysteine 583–cysteine 644, cysteine 596–cysteine 653, cysteine 624–cysteine 634, cysteine 682–cysteine 746, cysteine 695–cysteine 756, and cysteine 726–cysteine 736. The N-linked (GlcNAc...) asparagine glycan is linked to asparagine 87. N-linked (GlcNAc...) asparagine glycans are attached at residues asparagine 190 and asparagine 194. The N-linked (GlcNAc...) asparagine glycan is linked to asparagine 229. Asparagine 422 carries an N-linked (GlcNAc...) asparagine glycan. 2 N-linked (GlcNAc...) asparagine glycosylation sites follow: asparagine 601 and asparagine 612. N-linked (GlcNAc...) asparagine glycans are attached at residues asparagine 765, asparagine 808, asparagine 834, and asparagine 936. 6 cysteine pairs are disulfide-bonded: cysteine 803–cysteine 865, cysteine 833–cysteine 843, cysteine 906–cysteine 967, cysteine 937–cysteine 947, cysteine 971–cysteine 1013, and cysteine 999–cysteine 1026. The 60-residue stretch at 969-1028 (AGCDWPGPIRHGSFSPNRSSYDPLTTIDVKCDAGYELMGSKTLQCVTGCDWSRPTPECQR) folds into the Sushi domain. A glycan (N-linked (GlcNAc...) asparagine) is linked at asparagine 985. Asparagine 1031 is a glycosylation site (N-linked (GlcNAc...) asparagine). A helical transmembrane segment spans residues 1052-1072 (VMLIIGIILGAVVMMLIACVA). Topologically, residues 1073–1128 (LYLKGRNKNIGRGNPATTSAIWKPKKEFDELKEPVLSFSAMTAGGAGPEDGMGEDI) are cytoplasmic.

In terms of tissue distribution, from the mid-gastrula stage, expressed only in mesenchyme cells that are migrating toward the body wall. At the brachiolaria stage, expressed in presumptive coelomocytes of the coelomic pouch. Also expressed in adult coelomocytes (at protein level).

The protein localises to the cytoplasmic vesicle membrane. Functionally, involved in aggregate formation and phagocytosis by larval mesenchyme cells and adult coelomocytes. Binds to bacteria and may act as an opsonin in the innate immune system. This is Scavenger receptor cysteine-rich domain superfamily protein from Patiria pectinifera (Starfish).